Consider the following 604-residue polypeptide: MASAHIEHKLSLLPDLPGCYLMKNLNSQIIYVGKAKNLKNRVRSYFKSSHTGKTARLVSEIADFEFIVTSTDKEAFLLEITLIQKHQPYFNIKLKKGTGYPYIKITNERDPQILIVSDVRKDGGYYFGPYPNVYAAQETVNFIQKVYPLRRCHGFQKRPCLYYHMGQCLGACFKTVPVAEYDAQIKRIKSFLNGHVETVKKQLTKRMDQAAADLEFERAAELRDQLNYIEMTVEKQKIISNDNTPRDLFNFYLDKGWLSIQVFFIRQARLMKREKRLFPVVSTAPEEMTSFILQFYNRKNNVLPREVLVPNGLDKQVLSDILGIPVRTPQRGQKKDLLDMAQKNARIVLEEKFRLLELDERKTTGAMQEITDALGIPAGHKIEAFDHSHIQGADLVSAMVVFTDGQPNKKLYRKYKLRTVDHADEAASTREVIRRRYTRLLKEHAALPDLILMDGGEIQLEAAKDVLENELGIATPVAAMVKNDHHKTADLLASAGDQHLHLDPKSQGFYLLQRIQDEVHRFAITFHRQVHTKHSLSSRLDEIPGVGPKTRNKLLRKFGSMSKIAGASLEEIQSLGIAKNVAQTVKFSLAGGGVTPKHYQKGAT.

The GIY-YIG domain maps to 15–92 (DLPGCYLMKN…IQKHQPYFNI (78 aa)). A UVR domain is found at 197-232 (ETVKKQLTKRMDQAAADLEFERAAELRDQLNYIEMT).

The protein belongs to the UvrC family. Interacts with UvrB in an incision complex.

It localises to the cytoplasm. Its function is as follows. The UvrABC repair system catalyzes the recognition and processing of DNA lesions. UvrC both incises the 5' and 3' sides of the lesion. The N-terminal half is responsible for the 3' incision and the C-terminal half is responsible for the 5' incision. The chain is UvrABC system protein C from Lactiplantibacillus plantarum (strain ATCC BAA-793 / NCIMB 8826 / WCFS1) (Lactobacillus plantarum).